The primary structure comprises 486 residues: Recombining binding protein suppressor of hairless (486 aa).

DNA-binding regions lie at residues 43 to 53 and 151 to 156; these read QKSYGNEKRFF and SKPSKK. The residue at position 161 (lysine 161) is an N6-acetyllysine. The segment at 178 to 183 is DNA-binding; it reads RLRSQT. In terms of domain architecture, IPT/TIG spans 341–431; that stretch reads PVVESLQLNG…YSTSLTFTYT (91 aa). The span at 451–467 shows a compositional bias: polar residues; it reads SSQVPPNESNTNSEGSY. The interval 451 to 486 is disordered; sequence SSQVPPNESNTNSEGSYTNASTNSTSVTSSTATVVS. Residues 468–486 show a composition bias toward low complexity; it reads TNASTNSTSVTSSTATVVS.

Belongs to the Su(H) family. As to quaternary structure, interacts with activated NOTCH1, NOTCH2 or NOTCH3. Interacts with MINT/SHARP. This interaction may mediate the recruitment of large corepressor complexes containing proteins such as HDAC1, HDAC2, NCOR2, SAP30, FHL1/KYOT2 and CIR1. Interacts with EP300, MAML1 and PTF1A. Interacts with RITA1, leading to nuclear export, prevent the interaction between RBPJ and NICD product and subsequent down-regulation of the Notch signaling pathway. Interacts with SNW1. Interacts with CHCHD2 and CXXC5. Interacts with BEND6 (via BEN domain). Interacts with NKAPL. Interacts with ZMIZ1. Interacts with RBM15. Interacts with L3MBTL3 and KDM1A; the interaction with KDM1A is weaker in the absence of L3MBTL3 and the interaction with L3MBTL3 is impaired by Notch-derived peptides containing the intracellular domain (NICD).

Its subcellular location is the nucleus. The protein localises to the cytoplasm. Transcriptional regulator that plays a central role in Notch signaling, a signaling pathway involved in cell-cell communication that regulates a broad spectrum of cell-fate determinations. Acts as a transcriptional repressor when it is not associated with Notch proteins. When associated with some NICD product of Notch proteins (Notch intracellular domain), it acts as a transcriptional activator that activates transcription of Notch target genes. Probably represses or activates transcription via the recruitment of chromatin remodeling complexes containing histone deacetylase or histone acetylase proteins, respectively. Specifically binds to the immunoglobulin kappa-type J segment recombination signal sequence. Binds specifically to methylated DNA. Binds to the oxygen responsive element of COX4I2 and activates its transcription under hypoxia conditions (4% oxygen). Negatively regulates the phagocyte oxidative burst in response to bacterial infection by repressing transcription of NADPH oxidase subunits. This is Recombining binding protein suppressor of hairless (RBPJ) from Pongo abelii (Sumatran orangutan).